The sequence spans 343 residues: Flap endonuclease 1 (343 aa).

The interval 1–98 (MGVPIGDLVP…KELEKRREAR (98 aa)) is N-domain. Positions 27, 80, 152, 154, 173, 175, and 236 each coordinate Mg(2+). The I-domain stretch occupies residues 116-258 (EARKYAQRAT…KALEIVRYSR (143 aa)). Positions 330 to 338 (RQSTLESWF) are interaction with PCNA.

It belongs to the XPG/RAD2 endonuclease family. FEN1 subfamily. Interacts with PCNA. PCNA stimulates the nuclease activity without altering cleavage specificity. Mg(2+) serves as cofactor.

In terms of biological role, structure-specific nuclease with 5'-flap endonuclease and 5'-3' exonuclease activities involved in DNA replication and repair. During DNA replication, cleaves the 5'-overhanging flap structure that is generated by displacement synthesis when DNA polymerase encounters the 5'-end of a downstream Okazaki fragment. Binds the unpaired 3'-DNA end and kinks the DNA to facilitate 5' cleavage specificity. Cleaves one nucleotide into the double-stranded DNA from the junction in flap DNA, leaving a nick for ligation. Also involved in the base excision repair (BER) pathway. Acts as a genome stabilization factor that prevents flaps from equilibrating into structures that lead to duplications and deletions. Also possesses 5'-3' exonuclease activity on nicked or gapped double-stranded DNA. The sequence is that of Flap endonuclease 1 from Pyrococcus horikoshii (strain ATCC 700860 / DSM 12428 / JCM 9974 / NBRC 100139 / OT-3).